The sequence spans 166 residues: Interferon gamma (166 aa).

An N-terminal signal peptide occupies residues 1–23; the sequence is MKYTSYILAFQLCVVLGSLGCYC. Pyrrolidone carboxylic acid is present on Gln24. N-linked (GlcNAc...) asparagine glycans are attached at residues Asn48, Asn86, and Asn120.

This sequence belongs to the type II (or gamma) interferon family. As to quaternary structure, homodimer. Interacts with IFNGR1 (via extracellular domain); this interaction promotes IFNGR1 dimerization. Released primarily from activated T lymphocytes.

It is found in the secreted. In terms of biological role, type II interferon produced by immune cells such as T-cells and NK cells that plays crucial roles in antimicrobial, antiviral, and antitumor responses by activating effector immune cells and enhancing antigen presentation. Primarily signals through the JAK-STAT pathway after interaction with its receptor IFNGR1 to affect gene regulation. Upon IFNG binding, IFNGR1 intracellular domain opens out to allow association of downstream signaling components JAK2, JAK1 and STAT1, leading to STAT1 activation, nuclear translocation and transcription of IFNG-regulated genes. Many of the induced genes are transcription factors such as IRF1 that are able to further drive regulation of a next wave of transcription. Plays a role in class I antigen presentation pathway by inducing a replacement of catalytic proteasome subunits with immunoproteasome subunits. In turn, increases the quantity, quality, and repertoire of peptides for class I MHC loading. Increases the efficiency of peptide generation also by inducing the expression of activator PA28 that associates with the proteasome and alters its proteolytic cleavage preference. Up-regulates as well MHC II complexes on the cell surface by promoting expression of several key molecules such as cathepsins B/CTSB, H/CTSH, and L/CTSL. Participates in the regulation of hematopoietic stem cells during development and under homeostatic conditions by affecting their development, quiescence, and differentiation. This is Interferon gamma (IFNG) from Callithrix jacchus (White-tufted-ear marmoset).